The primary structure comprises 264 residues: MSGAADREAVFPTRQSLGIMKAKLKGAETGHSLLKRKSEALTKRFREITRRIDEAKRKMGRVMQIASLSLAEVTYAVGGNIGYQIQESAKSARFRIRAKQENVSGVLLPAFEAYQAEGNDDFAMTGLGKGGQQVQRCRETYARAVEALVELASLQTAFVILDEVIKVVNRRVNAIEHVIIPRTENTIKYINSELDELDREEFYRLKKVAAKKQRDNAETDAQMKAKKAEQQRLALADSENAEGEQTENTPADILAAEEDEDVIF.

Basic and acidic residues predominate over residues 214–230 (RDNAETDAQMKAKKAEQ). The interval 214–264 (RDNAETDAQMKAKKAEQQRLALADSENAEGEQTENTPADILAAEEDEDVIF) is disordered. A compositionally biased stretch (acidic residues) spans 255-264 (AAEEDEDVIF).

This sequence belongs to the V-ATPase D subunit family. As to quaternary structure, V-ATPase is a heteromultimeric enzyme composed of a peripheral catalytic V1 complex (components A to H) attached to an integral membrane V0 proton pore complex (components: a, c, c', c'', d, e, f and VOA1).

The protein localises to the vacuole membrane. Functionally, subunit of the V1 complex of vacuolar(H+)-ATPase (V-ATPase), a multisubunit enzyme composed of a peripheral complex (V1) that hydrolyzes ATP and a membrane integral complex (V0) that translocates protons. V-ATPase is responsible for acidifying and maintaining the pH of intracellular compartments. The protein is V-type proton ATPase subunit D (vma-8) of Neurospora crassa (strain ATCC 24698 / 74-OR23-1A / CBS 708.71 / DSM 1257 / FGSC 987).